Here is a 252-residue protein sequence, read N- to C-terminus: MFS-type transporter cctQ (252 aa).

2 consecutive transmembrane segments (helical) span residues 54 to 74 (IGSLMPLVYTTVAFFVAVVLP) and 116 to 136 (FGSFWVQSAVGTIPLFGIVGF). Asparagine 179 is a glycosylation site (N-linked (GlcNAc...) asparagine). 2 helical membrane passes run 180 to 200 (FSICLAQIVVLLMINTVWILA) and 208 to 228 (FLVWFLLLGGACALLAMYFTT).

The protein belongs to the major facilitator superfamily.

Its subcellular location is the membrane. The protein operates within mycotoxin biosynthesis. In terms of biological role, MFS-type transporter; part of the gene cluster that mediates the biosynthesis of the mycotoxin cyclochlorotine, a hepatotoxic and carcinogenic cyclic chlorinated pentapeptide. Most likely responsible for cyclochlorotine secretion and thereby may contribute to intrinsic resistance. In Talaromyces islandicus (Penicillium islandicum), this protein is MFS-type transporter cctQ.